A 287-amino-acid chain; its full sequence is Bifunctional protein FolD (287 aa).

NADP(+)-binding positions include 165–167, threonine 190, and isoleucine 231; that span reads GRG.

The protein belongs to the tetrahydrofolate dehydrogenase/cyclohydrolase family. As to quaternary structure, homodimer.

The catalysed reaction is (6R)-5,10-methylene-5,6,7,8-tetrahydrofolate + NADP(+) = (6R)-5,10-methenyltetrahydrofolate + NADPH. The enzyme catalyses (6R)-5,10-methenyltetrahydrofolate + H2O = (6R)-10-formyltetrahydrofolate + H(+). It participates in one-carbon metabolism; tetrahydrofolate interconversion. Its function is as follows. Catalyzes the oxidation of 5,10-methylenetetrahydrofolate to 5,10-methenyltetrahydrofolate and then the hydrolysis of 5,10-methenyltetrahydrofolate to 10-formyltetrahydrofolate. This Heliobacterium modesticaldum (strain ATCC 51547 / Ice1) protein is Bifunctional protein FolD.